The chain runs to 157 residues: XylDLEGF operon transcriptional activator 2 (157 aa).

One can recognise an HTH araC/xylS-type domain in the interval E39–L140. 2 consecutive DNA-binding regions (H-T-H motif) follow at residues E56–T77 and I107–F130.

The protein resides in the cytoplasm. Functionally, regulatory protein of the TOL plasmid xyl operons. XylS activates the xylXYZLTEGFJQKIH operon required for the degradation of toluene, m-xylene and p-xylene. This chain is XylDLEGF operon transcriptional activator 2 (xylS2), found in Pseudomonas putida (Arthrobacter siderocapsulatus).